The sequence spans 163 residues: Ubiquitin-like protein 1-ribosomal protein eS31 fusion protein (163 aa).

The Ubiquitin-like domain maps to 1–70; sequence MVFVKTLHRT…IYVNLELLGG (70 aa). Gly70 is covalently cross-linked (Glycyl lysine isopeptide (Gly-Lys) (interchain with K-? in acceptor proteins)). The C4-type zinc-finger motif lies at 115 to 138; it reads CQQPSCGGGVFMAQHANRHYCGRC.

The protein in the N-terminal section; belongs to the ubiquitin family. This sequence in the C-terminal section; belongs to the eukaryotic ribosomal protein eS31 family.

This Caenorhabditis elegans protein is Ubiquitin-like protein 1-ribosomal protein eS31 fusion protein.